A 274-amino-acid polypeptide reads, in one-letter code: Guanylyl cyclase 1 (274 aa).

As to quaternary structure, functions both as monomer and homooligomer. Requires Mg(2+) as cofactor.

The enzyme catalyses GTP = 3',5'-cyclic GMP + diphosphate. Its pathway is nucleotide metabolism. Its function is as follows. Magnesium-dependent guanylyl cyclase that catalyzes the formation of guanosine 3',5'-cyclic monophosphate (cGMP) from guanosine 5'-triphosphate (GTP). Can also use ATP as substrate with a low activity. This Arabidopsis thaliana (Mouse-ear cress) protein is Guanylyl cyclase 1.